The sequence spans 129 residues: Small ribosomal subunit protein uS11 (129 aa).

This sequence belongs to the universal ribosomal protein uS11 family. Part of the 30S ribosomal subunit. Interacts with proteins S7 and S18. Binds to IF-3.

Located on the platform of the 30S subunit, it bridges several disparate RNA helices of the 16S rRNA. Forms part of the Shine-Dalgarno cleft in the 70S ribosome. The protein is Small ribosomal subunit protein uS11 of Lacticaseibacillus casei (strain BL23) (Lactobacillus casei).